Consider the following 59-residue polypeptide: Large ribosomal subunit protein uL30 (59 aa).

Belongs to the universal ribosomal protein uL30 family. As to quaternary structure, part of the 50S ribosomal subunit.

This is Large ribosomal subunit protein uL30 from Bacillus subtilis (strain 168).